A 109-amino-acid chain; its full sequence is Hainantoxin-XVIII-2 (109 aa).

A signal peptide spans 1–18; that stretch reads MKLSIIIIATSLVIAVVA. A propeptide spanning residues 19-46 is cleaved from the precursor; that stretch reads FPSKDSKAIENDKTEQRMEIVVQETARA. Cystine bridges form between C47–C62, C59–C108, and C61–C81.

Belongs to the neurotoxin 25 family. F7 subfamily. Expressed by the venom gland.

The protein localises to the secreted. In terms of biological role, putative ion channel inhibitor. The polypeptide is Hainantoxin-XVIII-2 (Cyriopagopus hainanus (Chinese bird spider)).